The sequence spans 235 residues: Ribosomal RNA small subunit methyltransferase G (235 aa).

Residues Gly98, Met103, Val149–Glu150, and Arg164 each bind S-adenosyl-L-methionine.

It belongs to the methyltransferase superfamily. RNA methyltransferase RsmG family.

It is found in the cytoplasm. The enzyme catalyses guanosine(527) in 16S rRNA + S-adenosyl-L-methionine = N(7)-methylguanosine(527) in 16S rRNA + S-adenosyl-L-homocysteine. Specifically methylates the N7 position of guanine in position 527 of 16S rRNA. This is Ribosomal RNA small subunit methyltransferase G from Cupriavidus pinatubonensis (strain JMP 134 / LMG 1197) (Cupriavidus necator (strain JMP 134)).